A 718-amino-acid polypeptide reads, in one-letter code: Phenylalanine--tRNA ligase beta subunit (718 aa).

The region spanning 40–153 (FLNVSKIKFG…KADLKQDPID (114 aa)) is the tRNA-binding domain. The 76-residue stretch at 387–462 (DKKESFNFVW…RFYGYENLVF (76 aa)) folds into the B5 domain. Residues Asp-440, Asp-446, Glu-449, and Glu-450 each coordinate Mg(2+).

The protein belongs to the phenylalanyl-tRNA synthetase beta subunit family. Type 1 subfamily. In terms of assembly, tetramer of two alpha and two beta subunits. Requires Mg(2+) as cofactor.

It is found in the cytoplasm. It catalyses the reaction tRNA(Phe) + L-phenylalanine + ATP = L-phenylalanyl-tRNA(Phe) + AMP + diphosphate + H(+). The sequence is that of Phenylalanine--tRNA ligase beta subunit from Mycoplasmopsis pulmonis (strain UAB CTIP) (Mycoplasma pulmonis).